A 327-amino-acid polypeptide reads, in one-letter code: Serine/threonine-protein phosphatase PP1-1 (327 aa).

Positions 63, 65, 91, and 123 each coordinate Mn(2+). H124 serves as the catalytic Proton donor. H172 and H247 together coordinate Mn(2+). A disordered region spans residues 305–327; that stretch reads GYQGSSQNWHMTPPRKNKTGNSK. At T316 the chain carries Phosphothreonine; by CDC2. The span at 317–327 shows a compositional bias: basic residues; sequence PPRKNKTGNSK.

This sequence belongs to the PPP phosphatase family. PP-1 subfamily. In terms of assembly, oligomer. Requires Mn(2+) as cofactor.

The protein resides in the nucleus. The catalysed reaction is O-phospho-L-seryl-[protein] + H2O = L-seryl-[protein] + phosphate. The enzyme catalyses O-phospho-L-threonyl-[protein] + H2O = L-threonyl-[protein] + phosphate. Its function is as follows. Essential role in cell cycle control. PP1 is perhaps required for exit from mitosis. The sequence is that of Serine/threonine-protein phosphatase PP1-1 (dis2) from Schizosaccharomyces pombe (strain 972 / ATCC 24843) (Fission yeast).